Reading from the N-terminus, the 137-residue chain is Pro-corazonin (137 aa).

The first 20 residues, 1 to 20, serve as a signal peptide directing secretion; the sequence is MKHVFSTSLIVSLFVIFTDA. Q21 bears the Pyrrolidone carboxylic acid mark. An Asparagine amide modification is found at N31. Positions 68–137 are excised as a propeptide; it reads FLKSPCDVRL…RLLNDGMHRL (70 aa).

This sequence belongs to the corazonin family.

The protein localises to the secreted. Cardioactive peptide. Corazonin is probably involved in the physiological regulation of the heart beat. The chain is Pro-corazonin from Aedes aegypti (Yellowfever mosquito).